Consider the following 206-residue polypeptide: UPF0301 protein Msil_1255 (206 aa).

Belongs to the UPF0301 (AlgH) family.

This Methylocella silvestris (strain DSM 15510 / CIP 108128 / LMG 27833 / NCIMB 13906 / BL2) protein is UPF0301 protein Msil_1255.